The primary structure comprises 402 residues: Argininosuccinate synthase (402 aa).

ATP-binding positions include 13–21 and A40; that span reads AYSGGLDTS. L-citrulline-binding residues include Y91 and S96. G121 serves as a coordination point for ATP. L-aspartate is bound by residues T123, N127, and D128. N127 contributes to the L-citrulline binding site. L-citrulline contacts are provided by R131, S180, S189, E265, and Y277.

Belongs to the argininosuccinate synthase family. Type 1 subfamily. As to quaternary structure, homotetramer.

It localises to the cytoplasm. The enzyme catalyses L-citrulline + L-aspartate + ATP = 2-(N(omega)-L-arginino)succinate + AMP + diphosphate + H(+). Its pathway is amino-acid biosynthesis; L-arginine biosynthesis; L-arginine from L-ornithine and carbamoyl phosphate: step 2/3. The protein is Argininosuccinate synthase of Leptospira biflexa serovar Patoc (strain Patoc 1 / Ames).